The primary structure comprises 731 residues: Actin filament-associated protein 1 (731 aa).

Met-1 is subject to N-acetylmethionine. The interval 56 to 90 (NNLPAPPQMPLPEIPQPWLPPDSGPPPLPTSSLPE) is disordered. Over residues 59-84 (PAPPQMPLPEIPQPWLPPDSGPPPLP) the composition is skewed to pro residues. The SH3-binding signature appears at 70-73 (PQPW). Positions 93–96 (YEEA) match the SH2-binding 1 motif. Positions 118–139 (SSSYESYDEEEEDGKGKKTRHQ) are disordered. Residues 152–248 (DAKICAFLLR…WLKVIKEAYS (97 aa)) enclose the PH 1 domain. The tract at residues 252–318 (GPVDPECSPP…SKSEAKGTVS (67 aa)) is disordered. The segment covering 271-284 (AELEKKLSSERPSS) has biased composition (basic and acidic residues). Ser-283 and Ser-284 each carry phosphoserine. Positions 348–442 (DVPTCGYLNV…WIGILLAETG (95 aa)) constitute a PH 2 domain. The SH2-binding 2 motif lies at 452–457 (YDYIDV). Residues 513 to 544 (KNKKPPASSNGVPVKGKAPSSQQKKVETAGGV) form a disordered region. A Phosphoserine modification is found at Ser-549. Residues 558-649 (KNRVEADAKR…VKESLKKALA (92 aa)) adopt a coiled-coil conformation. An interaction with F-actin region spans residues 595-638 (DLRAAIEVNAGRKTQAALEDKLKRLEEECKQREAERVSLELELT). Positions 658-731 (IEPRSGTSSP…AKEWELKNGT (74 aa)) are disordered. Residues Ser-665, Ser-666, and Ser-669 each carry the phosphoserine modification. Position 676 is a phosphothreonine (Thr-676). Residues 678–687 (ENSPISSCDT) are compositionally biased toward polar residues. Residues Ser-680 and Ser-688 each carry the phosphoserine modification. Over residues 721-731 (KAKEWELKNGT) the composition is skewed to basic and acidic residues.

Monomer and homomultimer. Interacts via its C-terminus with F-actin; probably involving AFAP1 multimers. Interacts with activated SRC SH3-SH2 domains. Interacts via its PH 1 domain with PRKCA, PRKCB and PRKCI. In terms of processing, phosphorylated on tyrosine residues by SRC.

The protein localises to the cytoplasm. Its subcellular location is the cytoskeleton. The protein resides in the stress fiber. Can cross-link actin filaments into both network and bundle structures. May modulate changes in actin filament integrity and induce lamellipodia formation. May function as an adapter molecule that links other proteins, such as SRC and PKC to the actin cytoskeleton. This is Actin filament-associated protein 1 (Afap1) from Mus musculus (Mouse).